Consider the following 586-residue polypeptide: Arginine--tRNA ligase (586 aa).

Residues 128–138 (ANPTGPLHVGH) carry the 'HIGH' region motif.

It belongs to the class-I aminoacyl-tRNA synthetase family. As to quaternary structure, monomer.

It localises to the cytoplasm. The enzyme catalyses tRNA(Arg) + L-arginine + ATP = L-arginyl-tRNA(Arg) + AMP + diphosphate. This is Arginine--tRNA ligase from Thioalkalivibrio sulfidiphilus (strain HL-EbGR7).